The primary structure comprises 495 residues: MGTQKVTVSLIFALSIATIGSFQFGYNTGVINAPETIIKDFLNYTLEEKSENLPTEVLLTSLWSLSVAIFSVGGMIGSFSVGLFVNRFGRRNSMLMVNLLAVAGGCLMGFCKIAQSVEMLILGRLIIGLFCGLCTGFVPMYIGEISPTALRGAFGTLNQLGIVIGILVAQIFGLKVIMGTEELWPLLLGFTIIPAVLQSAALPFCPESPRFLLINRKEEENAKEILQRLWGTQDVSQDIQEMKDESARMAQEKQVTVLELFRSRSYRQPIIISIMLQLSQQLSGINAVFYYSTGIFKDAGVEEPIYATIGAGVVNTIFTVVSLFLVERAGRRTLHMIGLGGMAVCSILMTISLLLKDNYNWMSFVCIGAILVFVAFFEIGPGPIPWFIVAELFSQGPRPAAMAVAGCSNWTSNFLVGLLFPSAAFYLGAYVFIIFTGFLIVFLVFTFFKVPETRGRTFEEITRAFEGQGQDANRAEKGPIVEMNSMQPVKETATV.

Residues Met-1–Leu-10 lie on the Cytoplasmic side of the membrane. The helical transmembrane segment at Ile-11 to Asn-32 threads the bilayer. At Ala-33 to Ser-64 the chain is on the extracellular side. Asn-43 carries N-linked (GlcNAc...) asparagine glycosylation. Residues Leu-65–Val-85 form a helical membrane-spanning segment. Over Asn-86–Arg-90 the chain is Cytoplasmic. Residues Arg-91–Cys-111 traverse the membrane as a helical segment. At Lys-112–Glu-118 the chain is on the extracellular side. A helical membrane pass occupies residues Met-119–Ile-142. Over Gly-143–Ala-153 the chain is Cytoplasmic. Residues Phe-154–Leu-174 form a helical membrane-spanning segment. D-glucose is bound at residue Gln-159. Residues Lys-175 to Leu-183 lie on the Extracellular side of the membrane. The helical transmembrane segment at Trp-184–Phe-204 threads the bilayer. The Cytoplasmic portion of the chain corresponds to Cys-205 to Pro-269. The residue at position 232 (Thr-232) is a Phosphothreonine. Residues Ile-270–Tyr-290 form a helical membrane-spanning segment. Positions Gln-277–Ser-279 are important for selectivity against fructose. D-glucose is bound by residues Gln-280–Gln-281 and Asn-286. The Extracellular portion of the chain corresponds to Tyr-291 to Pro-304. A helical transmembrane segment spans residues Ile-305–Leu-325. Asn-315 contacts D-glucose. The Cytoplasmic segment spans residues Val-326 to Arg-331. Residues Arg-332–Ser-352 traverse the membrane as a helical segment. Over Leu-353–Ser-363 the chain is Extracellular. The chain crosses the membrane as a helical span at residues Phe-364–Val-389. Residues Glu-378 and Trp-386 each coordinate D-glucose. Residues Ala-390–Pro-399 lie on the Cytoplasmic side of the membrane. The chain crosses the membrane as a helical span at residues Ala-400–Phe-420. Topologically, residues Pro-421–Ala-429 are extracellular. The helical transmembrane segment at Tyr-430–Val-450 threads the bilayer. The Cytoplasmic portion of the chain corresponds to Pro-451–Val-495. Ser-485 is subject to Phosphoserine. Thr-492 carries the phosphothreonine modification.

Belongs to the major facilitator superfamily. Sugar transporter (TC 2.A.1.1) family. Glucose transporter subfamily. As to quaternary structure, interacts with SMIM43; the interaction may promote SLC2A3-mediated glucose transport to meet the energy needs of mesendoderm differentiation.

Its subcellular location is the cell membrane. It localises to the perikaryon. The protein localises to the cell projection. The enzyme catalyses D-glucose(out) = D-glucose(in). The catalysed reaction is D-galactose(in) = D-galactose(out). With respect to regulation, deoxyglucose transport is inhibited by D-glucose, D-galactose and maltose. Galactose transport is inhibited by D-glucose and maltose. Functionally, facilitative glucose transporter. Can also mediate the uptake of various other monosaccharides across the cell membrane. Mediates the uptake of glucose, 2-deoxyglucose, galactose, mannose, xylose and fucose, and probably also dehydroascorbate. Does not mediate fructose transport. Required for mesendoderm differentiation. The polypeptide is Solute carrier family 2, facilitated glucose transporter member 3 (Canis lupus familiaris (Dog)).